The following is a 152-amino-acid chain: Aspartate carbamoyltransferase regulatory chain (152 aa).

Zn(2+) is bound by residues Cys-109, Cys-114, Cys-138, and Cys-141.

The protein belongs to the PyrI family. In terms of assembly, contains catalytic and regulatory chains. Requires Zn(2+) as cofactor.

Its function is as follows. Involved in allosteric regulation of aspartate carbamoyltransferase. The chain is Aspartate carbamoyltransferase regulatory chain from Proteus mirabilis (strain HI4320).